The sequence spans 135 residues: uncharacterized protein (135 aa).

This sequence belongs to the transcriptional regulatory CopG/NikR family.

This is an uncharacterized protein from Methanocaldococcus jannaschii (strain ATCC 43067 / DSM 2661 / JAL-1 / JCM 10045 / NBRC 100440) (Methanococcus jannaschii).